The chain runs to 991 residues: Translation initiation factor IF-2 (991 aa).

2 disordered regions span residues 58–82 and 106–405; these read EGKK…GRSR and QARA…PAPQ. The span at 106 to 164 shows a compositional bias: low complexity; sequence QARADAAASDAAPAEPAPAAAEPSASAPVTAPVNAPAADAPQAPATAAPDTAAPAAETP. Over residues 165 to 175 the composition is skewed to pro residues; sequence SQPPAVEPQPA. 3 stretches are compositionally biased toward low complexity: residues 190–206, 221–258, and 267–276; these read AKPA…AAVE, AVQA…ASKP, and APVPVAAPAV. Positions 279-289 are enriched in basic and acidic residues; sequence AGREEARRAAE. Residues 379 to 388 are compositionally biased toward gly residues; that stretch reads RAGGKGGKGG. The segment covering 395–405 has biased composition (basic and acidic residues); that stretch reads QAERRHEPAPQ. Residues 492 to 659 enclose the tr-type G domain; the sequence is PRAPVVTVMG…NVLLQAEILE (168 aa). The segment at 501–508 is G1; the sequence is GHVDHGKT. 501-508 contributes to the GTP binding site; sequence GHVDHGKT. A G2 region spans residues 526-530; that stretch reads GITQH. Residues 547 to 550 form a G3 region; sequence DTPG. GTP-binding positions include 547-551 and 601-604; these read DTPGH and NKID. Residues 601-604 form a G4 region; it reads NKID. Residues 637–639 are G5; that stretch reads SAK.

It belongs to the TRAFAC class translation factor GTPase superfamily. Classic translation factor GTPase family. IF-2 subfamily.

It is found in the cytoplasm. Functionally, one of the essential components for the initiation of protein synthesis. Protects formylmethionyl-tRNA from spontaneous hydrolysis and promotes its binding to the 30S ribosomal subunits. Also involved in the hydrolysis of GTP during the formation of the 70S ribosomal complex. The polypeptide is Translation initiation factor IF-2 (Bordetella petrii (strain ATCC BAA-461 / DSM 12804 / CCUG 43448)).